A 1488-amino-acid polypeptide reads, in one-letter code: Chromosome partition protein MukB (1488 aa).

34–41 (GGNGAGKS) contacts ATP. Coiled-coil stretches lie at residues 326 to 418 (LEAD…QYNQ), 444 to 472 (LDTFQAKEQEATEKLLSLEQKMSVAQTAH), and 509 to 602 (RHLA…QRAP). Residues 666–783 (PGGAEDQRLN…SLPIFGRAAR (118 aa)) form a flexible hinge region. Coiled coils occupy residues 835 to 923 (EAEI…AKLE), 977 to 1116 (EMLS…AKAG), and 1209 to 1265 (VEAI…LQSV). Residues 1049 to 1074 (ADSGAEERARQRRDELHAQLSNNRSR) form a disordered region. The span at 1051 to 1065 (SGAEERARQRRDELH) shows a compositional bias: basic and acidic residues.

It belongs to the SMC family. MukB subfamily. As to quaternary structure, homodimerization via its hinge domain. Binds to DNA via its C-terminal region. Interacts, and probably forms a ternary complex, with MukE and MukF via its C-terminal region. The complex formation is stimulated by calcium or magnesium. Interacts with tubulin-related protein FtsZ.

The protein resides in the cytoplasm. Its subcellular location is the nucleoid. Its function is as follows. Plays a central role in chromosome condensation, segregation and cell cycle progression. Functions as a homodimer, which is essential for chromosome partition. Involved in negative DNA supercoiling in vivo, and by this means organize and compact chromosomes. May achieve or facilitate chromosome segregation by condensation DNA from both sides of a centrally located replisome during cell division. This chain is Chromosome partition protein MukB, found in Salmonella arizonae (strain ATCC BAA-731 / CDC346-86 / RSK2980).